The following is a 324-amino-acid chain: MNQPIVFMFSGQGSQYYQMGKELFAHNAAFRQKMLDLDDFAVSRFGYSVLKEMYHTGNRLSDPFDRLLFSHPAIFMAEYALAYALEQRGIRPDYVIGASLGEYAAAAVSGVLSAEDALDCVLEQARIVTETCRNGSMLAILGDPALYQDDPLLGEHSELASVNYHSHFVISGEREHIKKIMDDLREKQIPHQLLPVSYGFHSALVDQAEQPYKRFLAQKSIRTPFIPYISSATGEAETDIQADFFWDIVRKPIRFREALQFADSRQKGLYIDAGPSGTLAAFAKQILPAGSAERIRAIMTPFHKEQTHLQQIEDSILSPPGRRL.

The active site involves S99.

Its subcellular location is the cytoplasm. The protein operates within antibiotic biosynthesis; bacillaene biosynthesis. Probably involved in some intermediate steps for the synthesis of the antibiotic polyketide bacillaene which is involved in secondary metabolism. In Bacillus velezensis (strain DSM 23117 / BGSC 10A6 / LMG 26770 / FZB42) (Bacillus amyloliquefaciens subsp. plantarum), this protein is Polyketide biosynthesis acyltransferase homolog BaeD (baeD).